We begin with the raw amino-acid sequence, 65 residues long: Large ribosomal subunit protein bL35 (65 aa).

Belongs to the bacterial ribosomal protein bL35 family.

This chain is Large ribosomal subunit protein bL35, found in Paraburkholderia xenovorans (strain LB400).